Here is a 139-residue protein sequence, read N- to C-terminus: Probable disulfide formation protein C 1 (139 aa).

The helical transmembrane segment at 8–27 (EYALFTAWGASFIATLGSLY) threads the bilayer. The cysteines at positions 37 and 40 are disulfide-linked. 2 helical membrane-spanning segments follow: residues 42 to 61 (YQRIFMYPFVLWLGIAVVKK) and 68 to 85 (YSLPIASIGACISLYHYA). Cys99 and Cys104 are disulfide-bonded. Residues 113-135 (GFVTIPFLALIGFITIAVCSFIV) form a helical membrane-spanning segment.

This sequence belongs to the DsbB family. BdbC subfamily.

Its subcellular location is the cell membrane. Required for disulfide bond formation in some proteins. This chain is Probable disulfide formation protein C 1 (bdbC1), found in Bacillus cereus (strain ATCC 10987 / NRS 248).